The following is a 220-amino-acid chain: MVRMNEVFDCADPDQRARGIASAVAALKGGRLVVMPTDTVYGIGADAFDRAAVAALLSAKGRGRDMPVGVLVGSWHTIEGLVYTMPDGARELIRAFWPGALSLVVVHAPSLNWDLGDAHGTVMLRMPLHSVAIELLCEVGPMAVSSANVSGQPAAVDVDGARGQLGELVGVYLDAGPSAQQAASTIVDLTEATPRILRAGPVSVARIAEVLGVVPASLIA.

A YrdC-like domain is found at Ala17 to Val202.

It belongs to the SUA5 family.

The protein resides in the cytoplasm. It catalyses the reaction L-threonine + hydrogencarbonate + ATP = L-threonylcarbamoyladenylate + diphosphate + H2O. Functionally, required for the formation of a threonylcarbamoyl group on adenosine at position 37 (t(6)A37) in tRNAs that read codons beginning with adenine. Catalyzes the conversion of L-threonine, HCO(3)(-)/CO(2) and ATP to give threonylcarbamoyl-AMP (TC-AMP) as the acyladenylate intermediate, with the release of diphosphate. The sequence is that of Putative threonylcarbamoyl-AMP synthase from Mycobacterium leprae (strain TN).